Here is a 552-residue protein sequence, read N- to C-terminus: Harmonin (552 aa).

The N-terminal domain stretch occupies residues 1–86 (MDRKVAREFR…LTPRRSRKLK (86 aa)). PDZ domains lie at 87 to 169 (EVRL…HIGL) and 211 to 293 (KVFI…AAAG). Residues 194–552 (GVRGSLGSPG…KEYDDELTFF (359 aa)) are mediates interaction with MYO7B. At Ser-219 the chain carries Phosphoserine. The stretch at 310-377 (RELQRQELLM…EKFKKQWEED (68 aa)) forms a coiled coil. A disordered region spans residues 401–427 (KPKYDQGVEPELEPADDLDGGTEEQGE). Over residues 408–427 (VEPELEPADDLDGGTEEQGE) the composition is skewed to acidic residues. The 86-residue stretch at 452–537 (DVRLLRIKKE…QGGDWIDLVV (86 aa)) folds into the PDZ 3 domain.

As to quaternary structure, part of the IMAC/intermicrovillar adhesion complex/intermicrovillar tip-link complex composed of ANKS4B, MYO7B, USH1C, CDHR2 and CDHR5. Part of a complex composed of USH1C, USH1G and MYO7A. Interacts with F-actin. Interacts with USH2A. Interacts with SLC4A7. Interacts (via PDZ1 domain) with the C-terminus of USHBP1. Interacts (via N-terminus and PDZ 2 domain) with CDH23. Interacts with USH1G. Interacts with MYO7B. Interacts with CDHR2 and CDHR5; may mediate their interaction with MYO7B at the microvilli tip. Interacts (via PDZ 1 domain) with ANKS4B. Interacts (via PDZ 1 domain) with DOCK4. As to expression, expressed in small intestine, colon, kidney, eye and weakly in pancreas. Expressed also in vestibule of the inner ear.

It localises to the cytoplasm. The protein resides in the cytosol. Its subcellular location is the cytoskeleton. The protein localises to the cell projection. It is found in the microvillus. Functionally, anchoring/scaffolding protein that is a part of the functional network formed by USH1C, USH1G, CDH23 and MYO7A that mediates mechanotransduction in cochlear hair cells. Required for normal development and maintenance of cochlear hair cell bundles. As part of the intermicrovillar adhesion complex/IMAC plays a role in brush border differentiation, controlling microvilli organization and length. Probably plays a central regulatory role in the assembly of the complex, recruiting CDHR2, CDHR5 and MYO7B to the microvilli tips. This is Harmonin (USH1C) from Homo sapiens (Human).